We begin with the raw amino-acid sequence, 519 residues long: Dideacetyl fusicoccin A C-19 hydroxylase (519 aa).

A helical membrane pass occupies residues 16-36 (LPVAPILFTALAATIGAFLLS). Residues asparagine 177, asparagine 327, asparagine 414, and asparagine 432 are each glycosylated (N-linked (GlcNAc...) asparagine). Cysteine 454 is a heme binding site.

Belongs to the cytochrome P450 family. The cofactor is heme.

The protein localises to the membrane. It participates in mycotoxin biosynthesis. In terms of biological role, cytochrome P450 monooxygenase; part of the 2 gene clusters that mediate the biosynthesis of fusicoccins, diterpene glucosides that display phytohormone-like activity and function as potent activators of plasma membrane H(+)-ATPases in plants by modifying 14-3-3 proteins and cause the plant disease constriction canker. The first step in the pathway is performed by the fusicoccadiene synthase PaFS that possesses both prenyl transferase and terpene cyclase activity, converting isopentenyl diphosphate and dimethylallyl diphosphate into geranylgeranyl diphosphate (GGDP) and successively converting GGDP into fusicocca-2,10(14)-diene, a precursor for fusicoccin H. The second step is the oxidation at the C-8 position by the cytochrome P450 monooxygenase PaP450-2 to yield fusicocca-2,10(14)-diene-8-beta-ol. The cytochrome P450 monooxygenase PaP450-1 then catalyzes the hydroxylation at the C-16 position to produce fusicocca-2,10(14)-diene-8-beta,16-diol. The dioxygenase fc-dox then catalyzes the 16-oxydation of fusicocca-2,10(14)-diene-8-beta,16-diol to yield an aldehyde (8-beta-hydroxyfusicocca-1,10(14)-dien-16-al). The short-chain dehydrogenase/reductase fc-sdr catalyzes the reduction of the aldehyde to yield fusicocca-1,10(14)-diene-8-beta,16-diol. The next step is the hydroxylation at C-9 performed by the cytochrome P450 monooxygenase PaP450-3 that leads to fusicoccin H aglycon which is glycosylated to fusicoccin H by the O-glycosyltransferase PaGT. Hydroxylation at C-12 by the cytochrome P450 monooxygenase PaP450-4 leads then to the production of fusicoccin Q and is followed by methylation by the O-methyltransferase PaMT to yield fusicoccin P. Fusicoccin P is further converted to fusicoccin J via prenylation by the O-glucose prenyltransferase PaPT. Cytochrome P450 monooxygenase PaP450-5 then performs hydroxylation at C-19 to yield dideacetyl-fusicoccin A which is acetylated to 3'-O-deacetyl-fusicoccin A by the O-acetyltransferase PaAT-2. Finally, a another acetylation by the O-acetyltransferase PaAT-1 yields fusicoccin A. The polypeptide is Dideacetyl fusicoccin A C-19 hydroxylase (Phomopsis amygdali (Fusicoccum amygdali)).